Here is a 62-residue protein sequence, read N- to C-terminus: Large ribosomal subunit protein bL28 (62 aa).

Belongs to the bacterial ribosomal protein bL28 family.

This is Large ribosomal subunit protein bL28 from Helicobacter pylori (strain HPAG1).